Consider the following 190-residue polypeptide: Crossover junction endodeoxyribonuclease RuvC (190 aa).

Catalysis depends on residues D8, E67, and D139. The Mg(2+) site is built by D8, E67, and D139.

It belongs to the RuvC family. In terms of assembly, homodimer which binds Holliday junction (HJ) DNA. The HJ becomes 2-fold symmetrical on binding to RuvC with unstacked arms; it has a different conformation from HJ DNA in complex with RuvA. In the full resolvosome a probable DNA-RuvA(4)-RuvB(12)-RuvC(2) complex forms which resolves the HJ. The cofactor is Mg(2+).

It is found in the cytoplasm. It catalyses the reaction Endonucleolytic cleavage at a junction such as a reciprocal single-stranded crossover between two homologous DNA duplexes (Holliday junction).. In terms of biological role, the RuvA-RuvB-RuvC complex processes Holliday junction (HJ) DNA during genetic recombination and DNA repair. Endonuclease that resolves HJ intermediates. Cleaves cruciform DNA by making single-stranded nicks across the HJ at symmetrical positions within the homologous arms, yielding a 5'-phosphate and a 3'-hydroxyl group; requires a central core of homology in the junction. The consensus cleavage sequence is 5'-(A/T)TT(C/G)-3'. Cleavage occurs on the 3'-side of the TT dinucleotide at the point of strand exchange. HJ branch migration catalyzed by RuvA-RuvB allows RuvC to scan DNA until it finds its consensus sequence, where it cleaves and resolves the cruciform DNA. In Haemophilus influenzae (strain PittGG), this protein is Crossover junction endodeoxyribonuclease RuvC.